A 446-amino-acid chain; its full sequence is Methylenetetrahydrofolate--tRNA-(uracil-5-)-methyltransferase TrmFO (446 aa).

8-13 is an FAD binding site; it reads GAGLAG.

Belongs to the MnmG family. TrmFO subfamily. FAD serves as cofactor.

It is found in the cytoplasm. The enzyme catalyses uridine(54) in tRNA + (6R)-5,10-methylene-5,6,7,8-tetrahydrofolate + NADH + H(+) = 5-methyluridine(54) in tRNA + (6S)-5,6,7,8-tetrahydrofolate + NAD(+). The catalysed reaction is uridine(54) in tRNA + (6R)-5,10-methylene-5,6,7,8-tetrahydrofolate + NADPH + H(+) = 5-methyluridine(54) in tRNA + (6S)-5,6,7,8-tetrahydrofolate + NADP(+). Catalyzes the folate-dependent formation of 5-methyl-uridine at position 54 (M-5-U54) in all tRNAs. The sequence is that of Methylenetetrahydrofolate--tRNA-(uracil-5-)-methyltransferase TrmFO from Paracoccus denitrificans (strain Pd 1222).